We begin with the raw amino-acid sequence, 365 residues long: Isopentenyl-diphosphate delta-isomerase (365 aa).

4–5 is a binding site for substrate; sequence RK. Residues 62 to 64, Ser-92, and Asn-121 each bind FMN; that span reads GMT. 92–94 contacts substrate; sequence SQR. A substrate-binding site is contributed by Gln-155. Glu-156 contacts Mg(2+). Residues Lys-187, Thr-216, 267-269, and 288-289 contribute to the FMN site; these read GVR and AL.

This sequence belongs to the IPP isomerase type 2 family. Homooctamer. Dimer of tetramers. FMN is required as a cofactor. NADPH serves as cofactor. The cofactor is Mg(2+).

The protein localises to the cytoplasm. It catalyses the reaction isopentenyl diphosphate = dimethylallyl diphosphate. Its function is as follows. Involved in the biosynthesis of isoprenoids. Catalyzes the 1,3-allylic rearrangement of the homoallylic substrate isopentenyl (IPP) to its allylic isomer, dimethylallyl diphosphate (DMAPP). The polypeptide is Isopentenyl-diphosphate delta-isomerase (Methanopyrus kandleri (strain AV19 / DSM 6324 / JCM 9639 / NBRC 100938)).